We begin with the raw amino-acid sequence, 92 residues long: Turripeptide UID-02 (92 aa).

The N-terminal stretch at 1-21 is a signal peptide; it reads MGFYMLLTVALLLTSLMNVEA. The propeptide occupies 22-39; sequence TPVDQAERSALEKSGLGN.

Expressed by the venom duct.

The protein localises to the secreted. This is Turripeptide UID-02 from Gemmula speciosa (Splendid gem-turris).